The sequence spans 669 residues: CoB--CoM heterodisulfide reductase iron-sulfur subunit A 1 (669 aa).

153–176 provides a ligand contact to FAD; it reads GGGIAGIQAALDLADQGFKVYLVE. Residue Sec-200 is a non-standard amino acid, selenocysteine. 4 consecutive 4Fe-4S ferredoxin-type domains span residues 239–270, 287–318, 584–613, and 617–646; these read KKPRYVDEDACTGCGVCAEVCPIEVPNEFDLG, LVYTIDMEHCIQCGLCEEACPQDPPAIDFDQE, ITATVDEDVCGGCGACAQVCPFDAIEMVEK, and RVAEVQDVACQGCGQCAAACPSGAMQLRYY. Cys-249, Cys-252, Cys-255, Cys-259, Cys-296, Cys-299, Cys-302, Cys-306, Cys-593, Cys-596, Cys-599, Cys-603, Cys-626, Cys-629, Cys-632, and Cys-636 together coordinate [4Fe-4S] cluster.

This sequence belongs to the HdrA family. As to quaternary structure, the ferredoxin:CoB-CoM heterodisulfide reductase is composed of three subunits; HdrA, HdrB and HdrC. Requires [4Fe-4S] cluster as cofactor. FAD is required as a cofactor.

It functions in the pathway cofactor metabolism; coenzyme M-coenzyme B heterodisulfide reduction; coenzyme B and coenzyme M from coenzyme M-coenzyme B heterodisulfide: step 1/1. Functionally, part of a complex that catalyzes the reversible reduction of CoM-S-S-CoB to the thiol-coenzymes H-S-CoM (coenzyme M) and H-S-CoB (coenzyme B). This Methanopyrus kandleri (strain AV19 / DSM 6324 / JCM 9639 / NBRC 100938) protein is CoB--CoM heterodisulfide reductase iron-sulfur subunit A 1 (hdrA1).